Here is a 344-residue protein sequence, read N- to C-terminus: Dihydroorotase (344 aa).

Histidine 13 and histidine 15 together coordinate Zn(2+). Residues histidine 15–arginine 17 and asparagine 41 each bind substrate. Lysine 98, histidine 135, and histidine 173 together coordinate Zn(2+). Lysine 98 is modified (N6-carboxylysine). A substrate-binding site is contributed by histidine 135. Substrate is bound at residue leucine 218. Residue aspartate 247 participates in Zn(2+) binding. The active site involves aspartate 247. The substrate site is built by histidine 251 and alanine 263.

The protein belongs to the metallo-dependent hydrolases superfamily. DHOase family. Class II DHOase subfamily. In terms of assembly, homodimer. Requires Zn(2+) as cofactor.

The enzyme catalyses (S)-dihydroorotate + H2O = N-carbamoyl-L-aspartate + H(+). The protein operates within pyrimidine metabolism; UMP biosynthesis via de novo pathway; (S)-dihydroorotate from bicarbonate: step 3/3. Catalyzes the reversible cyclization of carbamoyl aspartate to dihydroorotate. The chain is Dihydroorotase from Neisseria meningitidis serogroup B (strain ATCC BAA-335 / MC58).